The sequence spans 335 residues: MAKINVLLLCGGGGAEHDISLMSARFFETSLAKSDQFSVLTLTLDKQGRYHTQDGNLCSLTNRREIRFEDPSIAPWAVDYVIPCIHGFPGETGDIQSYFNLIQLPYFGCESEASSNCFNKITAKMWFSALGVPNTPYIFLHQFDQEAIAQTQAAFDTWGSVFIKAASQGSSVGCYKVDVRDNIAKVLEEAFGYAPYVVVEKTIKARELEVAVYEYQGDIIATLPGEIICDTNKFYSFDEKYAKDSKARTDVVASNLSPKLCLQIQDYAIKAFKGMKLRHLSRIDFFLTQDDEILLNEINTFPGLTPISMFPKMLQNHGHDFTEYLSDVISQQLGR.

The region spanning Lys-124–Ser-330 is the ATP-grasp domain. Ala-154–Glu-209 provides a ligand contact to ATP. 3 residues coordinate Mg(2+): Asp-284, Glu-297, and Asn-299.

Belongs to the D-alanine--D-alanine ligase family. It depends on Mg(2+) as a cofactor. The cofactor is Mn(2+).

The protein localises to the cytoplasm. The enzyme catalyses 2 D-alanine + ATP = D-alanyl-D-alanine + ADP + phosphate + H(+). Its pathway is cell wall biogenesis; peptidoglycan biosynthesis. Functionally, cell wall formation. The polypeptide is D-alanine--D-alanine ligase (Shewanella denitrificans (strain OS217 / ATCC BAA-1090 / DSM 15013)).